We begin with the raw amino-acid sequence, 193 residues long: Ion-translocating oxidoreductase complex subunit A (193 aa).

The next 6 membrane-spanning stretches (helical) occupy residues 4–24, 39–59, 71–91, 102–122, 134–154, and 167–187; these read FFFILLSTALVNNVVLVKFLG, IGMGLATTFVLTLAAGASWMV, FLRILSLILVIAAIVQFIEVV, ALGIYLPLITTNCAVLGVALL, LLYGFGSASGFTLVLVIFAGM, and FAGAPIAFISAGLLSMAFMGF.

This sequence belongs to the NqrDE/RnfAE family. In terms of assembly, the complex is composed of six subunits: RnfA, RnfB, RnfC, RnfD, RnfE and RnfG.

The protein resides in the cellular chromatophore membrane. In terms of biological role, part of a membrane-bound complex that couples electron transfer with translocation of ions across the membrane. This Cereibacter sphaeroides (strain ATCC 17029 / ATH 2.4.9) (Rhodobacter sphaeroides) protein is Ion-translocating oxidoreductase complex subunit A.